The primary structure comprises 270 residues: 1-deoxy-11-beta-hydroxypentalenate dehydrogenase (270 aa).

Residue 12–36 (GAASGIGFALSARLAQAGARVVMTD) participates in NAD(+) binding. Residue Ser-144 participates in substrate binding. Tyr-157 functions as the Proton acceptor in the catalytic mechanism. Position 161 (Lys-161) interacts with NAD(+).

The protein belongs to the short-chain dehydrogenases/reductases (SDR) family.

It carries out the reaction 1-deoxy-11beta-hydroxypentalenate + NAD(+) = 1-deoxy-11-oxopentalenate + NADH + H(+). It functions in the pathway antibiotic biosynthesis; neopentalenolactone biosynthesis. Catalyzes the oxidation of 1-deoxy-11-beta-hydroxypentalenic acid to 1-deoxy-11-oxopentalenic acid in the biosynthesis of neopentalenolactone antibiotic. The polypeptide is 1-deoxy-11-beta-hydroxypentalenate dehydrogenase (ptlF) (Streptomyces avermitilis (strain ATCC 31267 / DSM 46492 / JCM 5070 / NBRC 14893 / NCIMB 12804 / NRRL 8165 / MA-4680)).